We begin with the raw amino-acid sequence, 462 residues long: Threonine--tRNA ligase, mitochondrial (462 aa).

The N-terminal 45 residues, 1 to 45 (MKIQLVRWHCSRNALWNRAFYSTRKATKNASSATPATMTSMVSQR), are a transit peptide targeting the mitochondrion.

The protein belongs to the class-II aminoacyl-tRNA synthetase family.

The protein localises to the mitochondrion matrix. The catalysed reaction is tRNA(Thr) + L-threonine + ATP = L-threonyl-tRNA(Thr) + AMP + diphosphate + H(+). The polypeptide is Threonine--tRNA ligase, mitochondrial (MST1) (Saccharomyces cerevisiae (strain ATCC 204508 / S288c) (Baker's yeast)).